The sequence spans 692 residues: Penicillin-binding protein activator LpoA (692 aa).

The N-terminal stretch at 1–26 is a signal peptide; it reads MLSSITVRTKSGRLIPLVLAATLLAA. Cysteine 27 carries the N-palmitoyl cysteine lipid modification. Residue cysteine 27 is the site of S-diacylglycerol cysteine attachment. Disordered regions lie at residues 297 to 316 and 324 to 373; these read AAAA…AAAT and VNAA…PDAH. A compositionally biased stretch (low complexity) spans 332-363; that stretch reads PSAQGTDAAAPAAPNDSAALPPLDAAGDPIAP.

The protein belongs to the LpoA family. As to quaternary structure, interacts with PBP1a.

It is found in the cell outer membrane. Regulator of peptidoglycan synthesis that is essential for the function of penicillin-binding protein 1A (PBP1a). This Edwardsiella piscicida protein is Penicillin-binding protein activator LpoA.